A 340-amino-acid polypeptide reads, in one-letter code: Sideroflexin-5 (340 aa).

4 consecutive transmembrane segments (helical) span residues 103-123 (IFMPFRMSGYIPFGTPIVVGL), 163-183 (FIQGYLGAVISAVSIAVGLNV), 254-274 (LTRVVLPMPILVLPPIVMSML), and 287-307 (LLPVQSLVCLAAFGLALPLAI).

It belongs to the sideroflexin family. Primarily expressed in the brain.

It is found in the mitochondrion inner membrane. The catalysed reaction is citrate(in) = citrate(out). Its function is as follows. Mitochondrial amino-acid transporter. Transports citrate. Does not act as a serine transporter: not able to mediate transport of serine into mitochondria. In brown adipose tissue, plays a role in the regulation of UCP1-dependent thermogenesis probably by supporting mitochondrial glycerol-3-phosphate utilization. This chain is Sideroflexin-5, found in Homo sapiens (Human).